The sequence spans 135 residues: ATP synthase epsilon chain (135 aa).

It belongs to the ATPase epsilon chain family. In terms of assembly, F-type ATPases have 2 components, CF(1) - the catalytic core - and CF(0) - the membrane proton channel. CF(1) has five subunits: alpha(3), beta(3), gamma(1), delta(1), epsilon(1). CF(0) has three main subunits: a, b and c.

The protein localises to the cell inner membrane. Its function is as follows. Produces ATP from ADP in the presence of a proton gradient across the membrane. This chain is ATP synthase epsilon chain, found in Rhodopseudomonas palustris (strain ATCC BAA-98 / CGA009).